Reading from the N-terminus, the 264-residue chain is Putative hydroxypyruvate isomerase (264 aa).

Residues Glu-145 and Glu-243 each act as proton donor/acceptor in the active site.

Belongs to the hyi family.

The enzyme catalyses 3-hydroxypyruvate = 2-hydroxy-3-oxopropanoate. Functionally, catalyzes the reversible isomerization between hydroxypyruvate and 2-hydroxy-3-oxopropanoate (also termed tartronate semialdehyde). The polypeptide is Putative hydroxypyruvate isomerase (Gip) (Drosophila melanogaster (Fruit fly)).